Reading from the N-terminus, the 494-residue chain is Cytochrome c-552 (494 aa).

Positions Met1–Val31 are cleaved as a signal peptide. His116 lines the heme c pocket. Heme-binding residues include Cys144, Cys147, and Lys148. Positions 182, 185, 186, 224, 227, and 228 each coordinate heme c. Ca(2+) is bound by residues Glu230, Tyr231, Lys276, and Gln278. Position 231 (Tyr231) interacts with substrate. His279 serves as a coordination point for substrate. Heme c-binding residues include His290, Cys297, Cys300, His301, His315, Cys328, Cys331, His332, and His407.

This sequence belongs to the cytochrome c-552 family. It depends on Ca(2+) as a cofactor. Heme c serves as cofactor.

Its subcellular location is the periplasm. The enzyme catalyses 6 Fe(III)-[cytochrome c] + NH4(+) + 2 H2O = 6 Fe(II)-[cytochrome c] + nitrite + 8 H(+). The protein operates within nitrogen metabolism; nitrate reduction (assimilation). Functionally, catalyzes the reduction of nitrite to ammonia, consuming six electrons in the process. This Parabacteroides distasonis (strain ATCC 8503 / DSM 20701 / CIP 104284 / JCM 5825 / NCTC 11152) protein is Cytochrome c-552.